The chain runs to 472 residues: Ribulose bisphosphate carboxylase large chain (472 aa).

Substrate is bound by residues asparagine 115 and threonine 165. Lysine 167 functions as the Proton acceptor in the catalytic mechanism. Lysine 169 contacts substrate. The Mg(2+) site is built by lysine 193, aspartate 195, and glutamate 196. An N6-carboxylysine modification is found at lysine 193. The active-site Proton acceptor is the histidine 286. Residues arginine 287, histidine 319, and serine 371 each contribute to the substrate site.

The protein belongs to the RuBisCO large chain family. Type I subfamily. In terms of assembly, heterohexadecamer of 8 large chains and 8 small chains. Mg(2+) serves as cofactor.

It carries out the reaction 2 (2R)-3-phosphoglycerate + 2 H(+) = D-ribulose 1,5-bisphosphate + CO2 + H2O. The catalysed reaction is D-ribulose 1,5-bisphosphate + O2 = 2-phosphoglycolate + (2R)-3-phosphoglycerate + 2 H(+). RuBisCO catalyzes two reactions: the carboxylation of D-ribulose 1,5-bisphosphate, the primary event in carbon dioxide fixation, as well as the oxidative fragmentation of the pentose substrate. Both reactions occur simultaneously and in competition at the same active site. This is Ribulose bisphosphate carboxylase large chain from Solemya velum gill symbiont.